The sequence spans 500 residues: Nitrate/nitrite transporter NrtP (500 aa).

12 helical membrane-spanning segments follow: residues tryptophan 19 to isoleucine 39, threonine 52 to leucine 72, isoleucine 79 to glutamine 99, leucine 109 to phenylalanine 129, phenylalanine 147 to serine 167, leucine 175 to valine 195, serine 220 to tryptophan 240, isoleucine 247 to alanine 267, tryptophan 364 to asparagine 384, isoleucine 389 to alanine 409, isoleucine 425 to serine 445, and threonine 451 to leucine 471.

It belongs to the major facilitator superfamily. Nitrate/nitrite porter (TC 2.A.1.8) family.

Its subcellular location is the cell inner membrane. Transport system for both nitrate and nitrite, with much higher affinity for nitrate than for nitrite. The protein is Nitrate/nitrite transporter NrtP of Nostoc punctiforme (strain ATCC 29133 / PCC 73102).